The following is a 431-amino-acid chain: Serine--tRNA ligase (431 aa).

237–239 lines the L-serine pocket; it reads TAE. 268–270 is an ATP binding site; it reads RSE. Position 291 (glutamate 291) interacts with L-serine. An ATP-binding site is contributed by 355–358; it reads EISS. Position 390 (serine 390) interacts with L-serine.

It belongs to the class-II aminoacyl-tRNA synthetase family. Type-1 seryl-tRNA synthetase subfamily. Homodimer. The tRNA molecule binds across the dimer.

The protein resides in the cytoplasm. It catalyses the reaction tRNA(Ser) + L-serine + ATP = L-seryl-tRNA(Ser) + AMP + diphosphate + H(+). The enzyme catalyses tRNA(Sec) + L-serine + ATP = L-seryl-tRNA(Sec) + AMP + diphosphate + H(+). Its pathway is aminoacyl-tRNA biosynthesis; selenocysteinyl-tRNA(Sec) biosynthesis; L-seryl-tRNA(Sec) from L-serine and tRNA(Sec): step 1/1. Functionally, catalyzes the attachment of serine to tRNA(Ser). Is also able to aminoacylate tRNA(Sec) with serine, to form the misacylated tRNA L-seryl-tRNA(Sec), which will be further converted into selenocysteinyl-tRNA(Sec). This chain is Serine--tRNA ligase, found in Neisseria gonorrhoeae (strain ATCC 700825 / FA 1090).